A 352-amino-acid chain; its full sequence is DNA-directed RNA polymerase subunit alpha (352 aa).

Residues 1–236 (MTVNIRNWQE…DQLQVFVHFE (236 aa)) form an alpha N-terminal domain (alpha-NTD) region. The alpha C-terminal domain (alpha-CTD) stretch occupies residues 257-352 (SDVNQLNRFL…AKKLEQELLG (96 aa)).

Belongs to the RNA polymerase alpha chain family. As to quaternary structure, homodimer. The RNAP catalytic core consists of 2 alpha, 1 beta, 1 beta' and 1 omega subunit. When a sigma factor is associated with the core the holoenzyme is formed, which can initiate transcription.

It carries out the reaction RNA(n) + a ribonucleoside 5'-triphosphate = RNA(n+1) + diphosphate. In terms of biological role, DNA-dependent RNA polymerase catalyzes the transcription of DNA into RNA using the four ribonucleoside triphosphates as substrates. In Sphingopyxis alaskensis (strain DSM 13593 / LMG 18877 / RB2256) (Sphingomonas alaskensis), this protein is DNA-directed RNA polymerase subunit alpha.